The following is a 276-amino-acid chain: Hydroxymethylpyrimidine/phosphomethylpyrimidine kinase (276 aa).

Q45 lines the 4-amino-5-hydroxymethyl-2-methylpyrimidine pocket.

It belongs to the ThiD family.

It catalyses the reaction 4-amino-5-hydroxymethyl-2-methylpyrimidine + ATP = 4-amino-2-methyl-5-(phosphooxymethyl)pyrimidine + ADP + H(+). It carries out the reaction 4-amino-2-methyl-5-(phosphooxymethyl)pyrimidine + ATP = 4-amino-2-methyl-5-(diphosphooxymethyl)pyrimidine + ADP. The protein operates within cofactor biosynthesis; thiamine diphosphate biosynthesis; 4-amino-2-methyl-5-diphosphomethylpyrimidine from 5-amino-1-(5-phospho-D-ribosyl)imidazole: step 2/3. Its pathway is cofactor biosynthesis; thiamine diphosphate biosynthesis; 4-amino-2-methyl-5-diphosphomethylpyrimidine from 5-amino-1-(5-phospho-D-ribosyl)imidazole: step 3/3. Functionally, catalyzes the phosphorylation of hydroxymethylpyrimidine phosphate (HMP-P) to HMP-PP, and of HMP to HMP-P. In Staphylococcus aureus (strain Mu50 / ATCC 700699), this protein is Hydroxymethylpyrimidine/phosphomethylpyrimidine kinase (thiD).